Reading from the N-terminus, the 270-residue chain is Indole-3-glycerol phosphate synthase (270 aa).

It belongs to the TrpC family.

The enzyme catalyses 1-(2-carboxyphenylamino)-1-deoxy-D-ribulose 5-phosphate + H(+) = (1S,2R)-1-C-(indol-3-yl)glycerol 3-phosphate + CO2 + H2O. Its pathway is amino-acid biosynthesis; L-tryptophan biosynthesis; L-tryptophan from chorismate: step 4/5. In Salinibacter ruber (strain DSM 13855 / M31), this protein is Indole-3-glycerol phosphate synthase.